The following is a 334-amino-acid chain: Lipoyl synthase (334 aa).

The tract at residues 1 to 36 (MSDALIAPNASSSEAPQSPAEHYDPTRKQKSADKTA) is disordered. A compositionally biased stretch (low complexity) spans 7–20 (APNASSSEAPQSPA). Basic and acidic residues predominate over residues 21 to 36 (EHYDPTRKQKSADKTA). [4Fe-4S] cluster contacts are provided by Cys81, Cys86, Cys92, Cys107, Cys111, Cys114, and Ser321. The Radical SAM core domain occupies 92–310 (CFGKGTATFM…EEEAYKMGFT (219 aa)).

The protein belongs to the radical SAM superfamily. Lipoyl synthase family. [4Fe-4S] cluster is required as a cofactor.

Its subcellular location is the cytoplasm. The catalysed reaction is [[Fe-S] cluster scaffold protein carrying a second [4Fe-4S](2+) cluster] + N(6)-octanoyl-L-lysyl-[protein] + 2 oxidized [2Fe-2S]-[ferredoxin] + 2 S-adenosyl-L-methionine + 4 H(+) = [[Fe-S] cluster scaffold protein] + N(6)-[(R)-dihydrolipoyl]-L-lysyl-[protein] + 4 Fe(3+) + 2 hydrogen sulfide + 2 5'-deoxyadenosine + 2 L-methionine + 2 reduced [2Fe-2S]-[ferredoxin]. The protein operates within protein modification; protein lipoylation via endogenous pathway; protein N(6)-(lipoyl)lysine from octanoyl-[acyl-carrier-protein]: step 2/2. Catalyzes the radical-mediated insertion of two sulfur atoms into the C-6 and C-8 positions of the octanoyl moiety bound to the lipoyl domains of lipoate-dependent enzymes, thereby converting the octanoylated domains into lipoylated derivatives. The sequence is that of Lipoyl synthase from Cupriavidus taiwanensis (strain DSM 17343 / BCRC 17206 / CCUG 44338 / CIP 107171 / LMG 19424 / R1) (Ralstonia taiwanensis (strain LMG 19424)).